The primary structure comprises 63 residues: Large ribosomal subunit protein uL29 (63 aa).

Belongs to the universal ribosomal protein uL29 family.

The protein is Large ribosomal subunit protein uL29 of Edwardsiella ictaluri (strain 93-146).